The primary structure comprises 211 residues: Thiamine-phosphate synthase (211 aa).

4-amino-2-methyl-5-(diphosphooxymethyl)pyrimidine-binding positions include 37 to 41 and Asn-69; that span reads QLRIK. 2 residues coordinate Mg(2+): Asp-70 and Asp-89. 4-amino-2-methyl-5-(diphosphooxymethyl)pyrimidine is bound at residue Ser-108. 134 to 136 serves as a coordination point for 2-[(2R,5Z)-2-carboxy-4-methylthiazol-5(2H)-ylidene]ethyl phosphate; it reads TQT. Lys-137 is a 4-amino-2-methyl-5-(diphosphooxymethyl)pyrimidine binding site. 2-[(2R,5Z)-2-carboxy-4-methylthiazol-5(2H)-ylidene]ethyl phosphate-binding positions include Gly-166 and 186–187; that span reads VS.

Belongs to the thiamine-phosphate synthase family. Mg(2+) serves as cofactor.

It catalyses the reaction 2-[(2R,5Z)-2-carboxy-4-methylthiazol-5(2H)-ylidene]ethyl phosphate + 4-amino-2-methyl-5-(diphosphooxymethyl)pyrimidine + 2 H(+) = thiamine phosphate + CO2 + diphosphate. It carries out the reaction 2-(2-carboxy-4-methylthiazol-5-yl)ethyl phosphate + 4-amino-2-methyl-5-(diphosphooxymethyl)pyrimidine + 2 H(+) = thiamine phosphate + CO2 + diphosphate. The catalysed reaction is 4-methyl-5-(2-phosphooxyethyl)-thiazole + 4-amino-2-methyl-5-(diphosphooxymethyl)pyrimidine + H(+) = thiamine phosphate + diphosphate. Its pathway is cofactor biosynthesis; thiamine diphosphate biosynthesis; thiamine phosphate from 4-amino-2-methyl-5-diphosphomethylpyrimidine and 4-methyl-5-(2-phosphoethyl)-thiazole: step 1/1. Its function is as follows. Condenses 4-methyl-5-(beta-hydroxyethyl)thiazole monophosphate (THZ-P) and 2-methyl-4-amino-5-hydroxymethyl pyrimidine pyrophosphate (HMP-PP) to form thiamine monophosphate (TMP). The sequence is that of Thiamine-phosphate synthase from Escherichia coli O139:H28 (strain E24377A / ETEC).